Here is a 1101-residue protein sequence, read N- to C-terminus: ATP-dependent DNA helicase mph1 (1101 aa).

4 disordered regions span residues 22–59, 95–138, 154–231, and 250–270; these read PGTS…SPDR, LTQP…QYHD, FEEE…TNRP, and SSQR…PTHH. A compositionally biased stretch (polar residues) spans 24–48; it reads TSDTVESVQTNNRPAKQSDISISQG. Residues 170–190 are compositionally biased toward low complexity; sequence TPARTAAAPCAAPKGTAADVP. Positions 191–202 are enriched in acidic residues; the sequence is FDLDDIPDDAFD. Positions 209-228 are enriched in polar residues; that stretch reads PPRSTSQATRGPPVQSQFRT. Residues 296–464 enclose the Helicase ATP-binding domain; sequence IAQRGLFHNL…AIIDDLGIAK (169 aa). 309 to 316 provides a ligand contact to ATP; sequence LPTGLGKT. A DEAH box motif is present at residues 412-415; it reads DEAH. Positions 634–808 constitute a Helicase C-terminal domain; that stretch reads YLKQVVLNHF…GTRFTFHDDK (175 aa). Disordered stretches follow at residues 824-890 and 991-1067; these read RQID…PTPE and SRDP…QDAF. Over residues 842–854 the composition is skewed to basic residues; the sequence is RRARPPKRPPKKF.

The protein belongs to the DEAD box helicase family. DEAH subfamily. FANCM sub-subfamily. In terms of assembly, interacts with the MHF histone-fold complex to form the FANCM-MHF complex.

The protein localises to the nucleus. The catalysed reaction is ATP + H2O = ADP + phosphate + H(+). In terms of biological role, ATP-dependent DNA helicase involved in DNA damage repair by homologous recombination and in genome maintenance. Capable of unwinding D-loops. Plays a role in limiting crossover recombinants during mitotic DNA double-strand break (DSB) repair. Component of a FANCM-MHF complex which promotes gene conversion at blocked replication forks, probably by reversal of the stalled fork. The polypeptide is ATP-dependent DNA helicase mph1 (Aspergillus fumigatus (strain CBS 144.89 / FGSC A1163 / CEA10) (Neosartorya fumigata)).